Reading from the N-terminus, the 398-residue chain is 4-hydroxy-3-methylbut-2-enyl diphosphate reductase (398 aa).

Residue C66 coordinates [4Fe-4S] cluster. H96 lines the (2E)-4-hydroxy-3-methylbut-2-enyl diphosphate pocket. Position 96 (H96) interacts with dimethylallyl diphosphate. H96 lines the isopentenyl diphosphate pocket. C157 provides a ligand contact to [4Fe-4S] cluster. H185 serves as a coordination point for (2E)-4-hydroxy-3-methylbut-2-enyl diphosphate. H185 lines the dimethylallyl diphosphate pocket. H185 is a binding site for isopentenyl diphosphate. E187 functions as the Proton donor in the catalytic mechanism. T250 provides a ligand contact to (2E)-4-hydroxy-3-methylbut-2-enyl diphosphate. C288 contacts [4Fe-4S] cluster. S317, S318, N319, and S379 together coordinate (2E)-4-hydroxy-3-methylbut-2-enyl diphosphate. Dimethylallyl diphosphate-binding residues include S317, S318, N319, and S379. 4 residues coordinate isopentenyl diphosphate: S317, S318, N319, and S379.

This sequence belongs to the IspH family. The cofactor is [4Fe-4S] cluster.

The enzyme catalyses isopentenyl diphosphate + 2 oxidized [2Fe-2S]-[ferredoxin] + H2O = (2E)-4-hydroxy-3-methylbut-2-enyl diphosphate + 2 reduced [2Fe-2S]-[ferredoxin] + 2 H(+). It carries out the reaction dimethylallyl diphosphate + 2 oxidized [2Fe-2S]-[ferredoxin] + H2O = (2E)-4-hydroxy-3-methylbut-2-enyl diphosphate + 2 reduced [2Fe-2S]-[ferredoxin] + 2 H(+). It participates in isoprenoid biosynthesis; dimethylallyl diphosphate biosynthesis; dimethylallyl diphosphate from (2E)-4-hydroxy-3-methylbutenyl diphosphate: step 1/1. Its pathway is isoprenoid biosynthesis; isopentenyl diphosphate biosynthesis via DXP pathway; isopentenyl diphosphate from 1-deoxy-D-xylulose 5-phosphate: step 6/6. Catalyzes the conversion of 1-hydroxy-2-methyl-2-(E)-butenyl 4-diphosphate (HMBPP) into a mixture of isopentenyl diphosphate (IPP) and dimethylallyl diphosphate (DMAPP). Acts in the terminal step of the DOXP/MEP pathway for isoprenoid precursor biosynthesis. The chain is 4-hydroxy-3-methylbut-2-enyl diphosphate reductase from Prochlorococcus marinus (strain MIT 9313).